The chain runs to 199 residues: Recombination protein RecR (199 aa).

A C4-type zinc finger spans residues 57-72 (CTVCGHITDIDPCAIC). The 97-residue stretch at 80–176 (TVVCVVQDSR…RVTRLAHGLP (97 aa)) folds into the Toprim domain.

It belongs to the RecR family.

In terms of biological role, may play a role in DNA repair. It seems to be involved in an RecBC-independent recombinational process of DNA repair. It may act with RecF and RecO. This is Recombination protein RecR from Exiguobacterium sp. (strain ATCC BAA-1283 / AT1b).